A 242-amino-acid polypeptide reads, in one-letter code: Zinc finger protein ZOP1 (242 aa).

The segment at 11-42 adopts a Matrin-type zinc-finger fold; the sequence is KWCEFCKIWIQNNPTSIRNHDLGKRHRECVDK. The stretch at 42–71 forms a coiled coil; that stretch reads KKLTDMRERSAAKDKELKKNEKLLQQIEAK. Residues 154 to 242 are disordered; the sequence is VKKPVSSSGA…PLLGLYNRPF (89 aa). Low complexity predominate over residues 155–172; that stretch reads KKPVSSSGAGPSVGKPPG. Residues 201 to 233 show a composition bias toward basic and acidic residues; the sequence is RQDEKPKKVSAEEKAALKAREAARKRVEDREKP.

In terms of assembly, component of a pre-mRNA splicing complex. Interacts with STA1. Interacts with PRP31.

It localises to the nucleus. The protein localises to the cajal body. Nucleic acid-binding protein that promotes Pol IV-dependent small interfering RNA (siRNA) accumulation, DNA methylation and transcriptional silencing. May possess both RNA-directed DNA methylation (RdDM)-dependent and -independent roles in transcriptional silencing. Acts as a pre-mRNA splicing factor that associates with several typical components of the splicing machinery as well as with Pol II. This is Zinc finger protein ZOP1 from Arabidopsis thaliana (Mouse-ear cress).